Consider the following 278-residue polypeptide: HTH-type transcriptional activator RhaS (278 aa).

Residues 174 to 272 (NLLLAWLEDH…NWSPRDIRQG (99 aa)) enclose the HTH araC/xylS-type domain. 2 consecutive DNA-binding regions (H-T-H motif) follow at residues 191 to 212 (DAVA…KQQT) and 239 to 262 (VTDI…RREF).

As to quaternary structure, binds DNA as a dimer.

It localises to the cytoplasm. In terms of biological role, activates expression of the rhaBAD and rhaT operons. The sequence is that of HTH-type transcriptional activator RhaS from Escherichia coli O157:H7.